The chain runs to 496 residues: tRNA-2-methylthio-N(6)-dimethylallyladenosine synthase (496 aa).

The MTTase N-terminal domain maps to lysine 43–glutamine 160. [4Fe-4S] cluster is bound by residues cysteine 52, cysteine 89, cysteine 123, cysteine 204, cysteine 208, and cysteine 211. A Radical SAM core domain is found at arginine 190–alanine 422. The region spanning histidine 425–alanine 493 is the TRAM domain.

Belongs to the methylthiotransferase family. MiaB subfamily. As to quaternary structure, monomer. It depends on [4Fe-4S] cluster as a cofactor.

It localises to the cytoplasm. It catalyses the reaction N(6)-dimethylallyladenosine(37) in tRNA + (sulfur carrier)-SH + AH2 + 2 S-adenosyl-L-methionine = 2-methylsulfanyl-N(6)-dimethylallyladenosine(37) in tRNA + (sulfur carrier)-H + 5'-deoxyadenosine + L-methionine + A + S-adenosyl-L-homocysteine + 2 H(+). In terms of biological role, catalyzes the methylthiolation of N6-(dimethylallyl)adenosine (i(6)A), leading to the formation of 2-methylthio-N6-(dimethylallyl)adenosine (ms(2)i(6)A) at position 37 in tRNAs that read codons beginning with uridine. The protein is tRNA-2-methylthio-N(6)-dimethylallyladenosine synthase of Psychrobacter arcticus (strain DSM 17307 / VKM B-2377 / 273-4).